Consider the following 437-residue polypeptide: Elongation factor 1-gamma (437 aa).

Ala-2 carries the N-acetylalanine modification. The GST N-terminal domain maps to 2–87 (AAGTLYTYPE…YVSNEELRGS (86 aa)). Positions 88 to 216 (TPEAAAQVVQ…VKLCEKMAQF (129 aa)) constitute a GST C-terminal domain. 2 positions are modified to N6-acetyllysine: Lys-147 and Lys-212. Basic and acidic residues predominate over residues 221–254 (FAESQPKKDTPRKEKGSREEKQKPQTERKEEKKA). Residues 221–268 (FAESQPKKDTPRKEKGSREEKQKPQTERKEEKKAAAPAPEEEMDECEQ) form a disordered region. Residue Lys-253 forms a Glycyl lysine isopeptide (Lys-Gly) (interchain with G-Cter in SUMO1) linkage. One can recognise an EF-1-gamma C-terminal domain in the interval 276 to 437 (AKDPFAHLPK…KAVNQGKIFK (162 aa)). Lys-285 is covalently cross-linked (Glycyl lysine isopeptide (Lys-Gly) (interchain with G-Cter in SUMO2)). N6-acetyllysine is present on Lys-401. An N6-acetyllysine; alternate modification is found at Lys-434. The residue at position 434 (Lys-434) is an N6-malonyllysine; alternate.

In terms of assembly, EF-1 is composed of four subunits: alpha, beta, delta, and gamma.

Probably plays a role in anchoring the complex to other cellular components. This Rattus norvegicus (Rat) protein is Elongation factor 1-gamma (Eef1g).